A 429-amino-acid chain; its full sequence is Ribosomal RNA small subunit methyltransferase B (429 aa).

Residues 254–260 (CAAPGGK), Asp277, Asp303, and Asp322 contribute to the S-adenosyl-L-methionine site. Cys375 functions as the Nucleophile in the catalytic mechanism. Residues 397 to 419 (ALSETGTPDQPGQQNLPGGEEGD) are disordered. Residues 400–412 (ETGTPDQPGQQNL) show a composition bias toward polar residues.

The protein belongs to the class I-like SAM-binding methyltransferase superfamily. RsmB/NOP family.

The protein localises to the cytoplasm. It catalyses the reaction cytidine(967) in 16S rRNA + S-adenosyl-L-methionine = 5-methylcytidine(967) in 16S rRNA + S-adenosyl-L-homocysteine + H(+). Functionally, specifically methylates the cytosine at position 967 (m5C967) of 16S rRNA. This chain is Ribosomal RNA small subunit methyltransferase B, found in Salmonella newport (strain SL254).